We begin with the raw amino-acid sequence, 444 residues long: Tubulin beta-8 chain (444 aa).

An MREI motif motif is present at residues 1–4; sequence MREI. GTP-binding residues include Gln-11, Glu-69, Ser-138, Gly-142, Thr-143, and Gly-144. A Mg(2+)-binding site is contributed by Glu-69. A Phosphoserine; by CDK1 modification is found at Ser-172. Residues Asn-204 and Asn-226 each coordinate GTP. The disordered stretch occupies residues 423–444; that stretch reads QQYQDATAEEEEDEEYAEEEVA. Over residues 429–444 the composition is skewed to acidic residues; that stretch reads TAEEEEDEEYAEEEVA. Glu-436 carries the 5-glutamyl polyglutamate modification.

It belongs to the tubulin family. As to quaternary structure, dimer of alpha and beta chains. A typical microtubule is a hollow water-filled tube with an outer diameter of 25 nm and an inner diameter of 15 nM. Alpha-beta heterodimers associate head-to-tail to form protofilaments running lengthwise along the microtubule wall with the beta-tubulin subunit facing the microtubule plus end conferring a structural polarity. Microtubules usually have 13 protofilaments but different protofilament numbers can be found in some organisms and specialized cells. It depends on Mg(2+) as a cofactor. Some glutamate residues at the C-terminus are polyglutamylated, resulting in polyglutamate chains on the gamma-carboxyl group. Polyglutamylation plays a key role in microtubule severing by spastin (SPAST). SPAST preferentially recognizes and acts on microtubules decorated with short polyglutamate tails: severing activity by SPAST increases as the number of glutamates per tubulin rises from one to eight, but decreases beyond this glutamylation threshold. Glutamylation is also involved in cilia motility. In terms of processing, some glutamate residues at the C-terminus are monoglycylated but not polyglycylated due to the absence of functional TTLL10 in human. Monoglycylation is mainly limited to tubulin incorporated into cilia and flagella axonemes, which is required for their stability and maintenance. Flagella glycylation controls sperm motility. Both polyglutamylation and monoglycylation can coexist on the same protein on adjacent residues, and lowering glycylation levels increases polyglutamylation, and reciprocally. Post-translationally, phosphorylated on Ser-172 by CDK1 during the cell cycle, from metaphase to telophase, but not in interphase. This phosphorylation inhibits tubulin incorporation into microtubules. Expressed at a high level in oocytes, at different stages of development.

The protein resides in the cytoplasm. It localises to the cytoskeleton. It is found in the spindle. Functionally, tubulin is the major constituent of microtubules, a cylinder consisting of laterally associated linear protofilaments composed of alpha- and beta-tubulin heterodimers. Microtubules grow by the addition of GTP-tubulin dimers to the microtubule end, where a stabilizing cap forms. Below the cap, tubulin dimers are in GDP-bound state, owing to GTPase activity of alpha-tubulin. TUBB8 has a key role in meiotic spindle assembly and oocyte maturation. The protein is Tubulin beta-8 chain of Homo sapiens (Human).